We begin with the raw amino-acid sequence, 233 residues long: Large ribosomal subunit protein uL1 (233 aa).

The protein belongs to the universal ribosomal protein uL1 family. In terms of assembly, part of the 50S ribosomal subunit.

Functionally, binds directly to 23S rRNA. The L1 stalk is quite mobile in the ribosome, and is involved in E site tRNA release. In terms of biological role, protein L1 is also a translational repressor protein, it controls the translation of the L11 operon by binding to its mRNA. The polypeptide is Large ribosomal subunit protein uL1 (Vibrio parahaemolyticus serotype O3:K6 (strain RIMD 2210633)).